A 275-amino-acid polypeptide reads, in one-letter code: Large ribosomal subunit protein uL2 (275 aa).

Residues 224-275 (AMNPVDHPHGGGEGKAPIGHPGPLTPWGKPALGYKTRKKGKASDKFIVKRRK) are disordered. The span at 264 to 275 (KASDKFIVKRRK) shows a compositional bias: basic and acidic residues.

This sequence belongs to the universal ribosomal protein uL2 family. As to quaternary structure, part of the 50S ribosomal subunit. Forms a bridge to the 30S subunit in the 70S ribosome.

Its function is as follows. One of the primary rRNA binding proteins. Required for association of the 30S and 50S subunits to form the 70S ribosome, for tRNA binding and peptide bond formation. It has been suggested to have peptidyltransferase activity; this is somewhat controversial. Makes several contacts with the 16S rRNA in the 70S ribosome. The polypeptide is Large ribosomal subunit protein uL2 (Caldanaerobacter subterraneus subsp. tengcongensis (strain DSM 15242 / JCM 11007 / NBRC 100824 / MB4) (Thermoanaerobacter tengcongensis)).